Reading from the N-terminus, the 58-residue chain is MAKVKITQVVSAIKKTDNQKRVLASLGLGKINSSVEQELTPSIKGMLNKVNHLVVVSE.

This sequence belongs to the universal ribosomal protein uL30 family. In terms of assembly, part of the 50S ribosomal subunit.

The chain is Large ribosomal subunit protein uL30 from Cytophaga hutchinsonii (strain ATCC 33406 / DSM 1761 / CIP 103989 / NBRC 15051 / NCIMB 9469 / D465).